Consider the following 294-residue polypeptide: MANNIPIGSAVRTQVIINRYFVKAKKNLGQNFLIDQNAILGIVEAADIHAGDQVIEIGPGIGSLTEQLLLAGAKVFAYEVDDSLPEILQNELPKKIGDAPLEDRFKLMLKDVLKANFKEDLAGFFDMSKPIKVVANLPYYITTPIIFALAESDLHFASLTLMMQKEVAERLEAKPGSKEYGPLTISVQTEMDVKVALEVNHNSFMPRPKVDSSVVVLTPLKNKPEIENRKHFVWVVKMCFSQRRKTLNNNLKTLIPDSEKREALIKKLGVDPRVRPENLTIEQFIEIARNIPAK.

The S-adenosyl-L-methionine site is built by N31, L33, G58, E79, D111, and N136.

Belongs to the class I-like SAM-binding methyltransferase superfamily. rRNA adenine N(6)-methyltransferase family. RsmA subfamily.

It is found in the cytoplasm. The catalysed reaction is adenosine(1518)/adenosine(1519) in 16S rRNA + 4 S-adenosyl-L-methionine = N(6)-dimethyladenosine(1518)/N(6)-dimethyladenosine(1519) in 16S rRNA + 4 S-adenosyl-L-homocysteine + 4 H(+). In terms of biological role, specifically dimethylates two adjacent adenosines (A1518 and A1519) in the loop of a conserved hairpin near the 3'-end of 16S rRNA in the 30S particle. May play a critical role in biogenesis of 30S subunits. The polypeptide is Ribosomal RNA small subunit methyltransferase A (Lactobacillus helveticus (strain DPC 4571)).